We begin with the raw amino-acid sequence, 3856 residues long: Serine/threonine-protein kinase ATM (3856 aa).

Residues 108–162 (VGNLVWVMTKYKKWWPGEVVDFKADAKESFMVRSIGQSHLVSWFASSKLKPFKES) enclose the PWWP domain. The disordered stretch occupies residues 648-681 (GIPDLNGTNTEPTLVLPQVEPTQRRRRRKKEESP). Residues 2727 to 3393 (VVAGSAVVCG…ILQLLALANG (667 aa)) form the FAT domain. The Bipartite nuclear localization signal signature appears at 3233-3249 (RKHKTKELEVFIKRFKS). The PI3K/PI4K catalytic domain maps to 3499–3811 (LSDSVTVMNG…GNKDATRALM (313 aa)). The interval 3505 to 3511 (VMNGINA) is G-loop. Residues 3678–3686 (GLGDRHAMN) are catalytic loop. An activation loop region spans residues 3698-3722 (HIDLGVAFEQGLMLKTPERVPFRLT). Residues 3824-3856 (EMRSIHGQAQQLIQDAIDTDRLSHMFPGWGAWM) form the FATC domain.

The protein belongs to the PI3/PI4-kinase family. In terms of assembly, interacts with RUG3. In terms of tissue distribution, ubiquitously expressed at low levels with slightly higher levels in flower buds.

Its subcellular location is the nucleus. It catalyses the reaction L-seryl-[protein] + ATP = O-phospho-L-seryl-[protein] + ADP + H(+). The enzyme catalyses L-threonyl-[protein] + ATP = O-phospho-L-threonyl-[protein] + ADP + H(+). Serine/threonine protein kinase which activates checkpoint signaling upon genotoxic stresses such as ionizing radiation (IR) or DNA replication stalling. Plays a central role in the perception and response to both stress-induced damage in somatic cells and developmentally programmed DNA damage during meiosis. Recognizes the substrate consensus sequence [ST]-Q. Phosphorylates histone variant H2AX to form H2AXS139ph at double strand breaks (DSBs), thereby regulating DNA damage response mechanism. Involved in transcriptional regulation of RAD51, PARP1, GR1, and LIG4 in response to DNA double strand breaks. Plays a dual role by activating the DNA damage response at dysfunctional telomeres and yet preventing this activation at functional telomeres. Not required for telomere length homeostasis. Regulates DNA damage response (DDR) synergistically with RUG3. Together with RUG3, involved in the splicing of the ND2/NAD2 mRNA. The polypeptide is Serine/threonine-protein kinase ATM (Arabidopsis thaliana (Mouse-ear cress)).